Reading from the N-terminus, the 211-residue chain is Protein TMA23 (211 aa).

The interval 115–211 (ASFVVSSASS…SARRDRKEHI (97 aa)) is disordered. The span at 116–125 (SFVVSSASSS) shows a compositional bias: low complexity. Composition is skewed to basic residues over residues 140–149 (VKRKKLKKDK), 158–176 (KKKKKKKSKKESKKGKKSK), and 185–197 (SKHKKSKKSKKHK). The segment covering 198–211 (KEESSARRDRKEHI) has biased composition (basic and acidic residues).

In terms of assembly, forms homooligomers. Associates with ribosomal complexes.

The protein resides in the nucleus. Its subcellular location is the nucleolus. Trans-acting factors of the ribosome biogenesis process. In Saccharomyces cerevisiae (strain ATCC 204508 / S288c) (Baker's yeast), this protein is Protein TMA23 (TMA23).